The primary structure comprises 242 residues: Protein HTATIP2 (242 aa).

A2 is subject to N-acetylalanine. The interval 2 to 25 (AETEALSKLREDFRMQNKSVFILG) is required for interaction with elongation factor EEF1A1. 12 residues coordinate NADPH: S27, G28, E29, T30, R52, R53, L92, G93, Y143, K147, L170, and R178. The active-site Proton acceptor is Y143. K147 is a catalytic residue.

In terms of assembly, monomer. Forms homodimers during oxidative stress. Interacts (via N-terminus) with elongation factor EEF1A1 (via middle-region); the interaction is direct and competes with EEF1A1 binding to guanyl-nucleotide exchange factor EEF1B2, thereby inhibiting GDP for GTP exchange and reactivation of EEF1A1. Interacts with nuclear transport receptors XPO4, IPO5/RANBP5, IPO7, IPO9 and KPNB1 as well as GCN1L1/GCN1 and LRPPRC probably through their HEAT repeats. Binds NCOA5/CIA.

It is found in the cytoplasm. Represses translation by preventing reactivation of elongation factor eEF1A. May also inhibit nuclear import by competing with nuclear import substrates for binding to a subset of nuclear transport receptors. Has additionally been proposed to act as a redox sensor involved in cellular oxidative stress surveillance. The sequence is that of Protein HTATIP2 (HTATIP2) from Gorilla gorilla gorilla (Western lowland gorilla).